We begin with the raw amino-acid sequence, 240 residues long: 1-(5-phosphoribosyl)-5-[(5-phosphoribosylamino)methylideneamino] imidazole-4-carboxamide isomerase (240 aa).

The active-site Proton acceptor is Asp-8. Asp-129 functions as the Proton donor in the catalytic mechanism.

It belongs to the HisA/HisF family.

The protein localises to the cytoplasm. The enzyme catalyses 1-(5-phospho-beta-D-ribosyl)-5-[(5-phospho-beta-D-ribosylamino)methylideneamino]imidazole-4-carboxamide = 5-[(5-phospho-1-deoxy-D-ribulos-1-ylimino)methylamino]-1-(5-phospho-beta-D-ribosyl)imidazole-4-carboxamide. The protein operates within amino-acid biosynthesis; L-histidine biosynthesis; L-histidine from 5-phospho-alpha-D-ribose 1-diphosphate: step 4/9. This is 1-(5-phosphoribosyl)-5-[(5-phosphoribosylamino)methylideneamino] imidazole-4-carboxamide isomerase from Dinoroseobacter shibae (strain DSM 16493 / NCIMB 14021 / DFL 12).